The chain runs to 177 residues: Large ribosomal subunit protein uL5 (177 aa).

The protein belongs to the universal ribosomal protein uL5 family. As to quaternary structure, part of the 50S ribosomal subunit; contacts the 5S rRNA and probably tRNA. Forms a bridge to the 30S subunit in the 70S ribosome.

In terms of biological role, this is one of the proteins that bind and probably mediate the attachment of the 5S RNA into the large ribosomal subunit, where it forms part of the central protuberance. In the 70S ribosome it contacts protein S13 of the 30S subunit (bridge B1b), connecting the 2 subunits; this bridge is implicated in subunit movement. May contact the P site tRNA; the 5S rRNA and some of its associated proteins might help stabilize positioning of ribosome-bound tRNAs. In Sulfurisphaera tokodaii (strain DSM 16993 / JCM 10545 / NBRC 100140 / 7) (Sulfolobus tokodaii), this protein is Large ribosomal subunit protein uL5.